The chain runs to 685 residues: Putative pentatricopeptide repeat-containing protein At3g08820 (685 aa).

PPR repeat units follow at residues 75 to 109 (NIFL…GLYL), 110 to 144 (HGFT…GFNH), 145 to 175 (DVAA…IPDR), 176 to 210 (SVVT…GVKP), 211 to 245 (DSYF…EMQK), 246 to 276 (NSFV…MVEK), 277 to 311 (DIVT…NLKP), 312 to 346 (DQFS…EFLT), 347 to 381 (NLFM…DIVI), 383 to 412 (NAAI…GISP), 413 to 443 (DGST…ISCV), and 449 to 479 (TVEH…MPMR). Residues 484-559 (VWGALLSGCR…IPGYSWIELE (76 aa)) are type E motif. Residues 560 to 590 (GKVHEFLADDKSHPLSDKIYAKLEDLGNEMR) are type E(+) motif. The segment at 591-685 (LMGFVPTTEF…NGSCSCNDYW (95 aa)) is type DYW motif.

Belongs to the PPR family. PCMP-H subfamily.

In Arabidopsis thaliana (Mouse-ear cress), this protein is Putative pentatricopeptide repeat-containing protein At3g08820 (PCMP-H84).